A 218-amino-acid chain; its full sequence is Glutathione S-transferase Mu 2 (218 aa).

One can recognise a GST N-terminal domain in the interval 2–88 (PMTLGYWDIR…YLGRKHNLCG (87 aa)). A glutathione-binding site is contributed by 7–8 (YW). 2 positions are modified to phosphoserine: Ser27 and Ser44. Glutathione is bound by residues 43–46 (RSQW), Lys50, 59–60 (NL), and 72–73 (QS). In terms of domain architecture, GST C-terminal spans 90 to 214 (TEEERIRVDV…SKPIFAKMAF (125 aa)). Substrate is bound at residue Tyr116. Ser117 carries the post-translational modification Phosphoserine.

Belongs to the GST superfamily. Mu family. Homodimer or heterodimer.

Its subcellular location is the cytoplasm. The enzyme catalyses RX + glutathione = an S-substituted glutathione + a halide anion + H(+). It catalyses the reaction 11(S)-hydroxy-14(S),15(S)-epoxy-(5Z,8Z,12E)-eicosatrienoate + glutathione = (11S,15S)-dihydroxy-14(R)-S-glutathionyl-(5Z,8Z,12E)-eicosatrienoate. Conjugation of reduced glutathione to a wide number of exogenous and endogenous hydrophobic electrophiles. Participates in the formation of novel hepoxilin regioisomers. This chain is Glutathione S-transferase Mu 2, found in Rattus norvegicus (Rat).